The primary structure comprises 132 residues: Small ribosomal subunit protein uS8 (132 aa).

The protein belongs to the universal ribosomal protein uS8 family. Part of the 30S ribosomal subunit. Contacts proteins S5 and S12.

Functionally, one of the primary rRNA binding proteins, it binds directly to 16S rRNA central domain where it helps coordinate assembly of the platform of the 30S subunit. This chain is Small ribosomal subunit protein uS8, found in Leifsonia xyli subsp. xyli (strain CTCB07).